The chain runs to 498 residues: ATP synthase subunit beta, chloroplastic (498 aa).

172 to 179 (GGAGVGKT) is an ATP binding site.

It belongs to the ATPase alpha/beta chains family. F-type ATPases have 2 components, CF(1) - the catalytic core - and CF(0) - the membrane proton channel. CF(1) has five subunits: alpha(3), beta(3), gamma(1), delta(1), epsilon(1). CF(0) has four main subunits: a(1), b(1), b'(1) and c(9-12).

It localises to the plastid. It is found in the chloroplast thylakoid membrane. It catalyses the reaction ATP + H2O + 4 H(+)(in) = ADP + phosphate + 5 H(+)(out). In terms of biological role, produces ATP from ADP in the presence of a proton gradient across the membrane. The catalytic sites are hosted primarily by the beta subunits. This is ATP synthase subunit beta, chloroplastic from Pelargonium hortorum (Common geranium).